The primary structure comprises 471 residues: Trigger factor (471 aa).

One can recognise a PPIase FKBP-type domain in the interval glycine 165–proline 244. A disordered region spans residues valine 407–serine 471. Positions aspartate 416 to proline 443 are enriched in acidic residues.

The protein belongs to the FKBP-type PPIase family. Tig subfamily.

Its subcellular location is the cytoplasm. The catalysed reaction is [protein]-peptidylproline (omega=180) = [protein]-peptidylproline (omega=0). Its function is as follows. Involved in protein export. Acts as a chaperone by maintaining the newly synthesized protein in an open conformation. Functions as a peptidyl-prolyl cis-trans isomerase. The sequence is that of Trigger factor from Kineococcus radiotolerans (strain ATCC BAA-149 / DSM 14245 / SRS30216).